The sequence spans 239 residues: Serine protease SplD (239 aa).

The signal sequence occupies residues 1-36; sequence MNKNIIIKSIAALTILTSITGVGTTVVDGIQQTAKA. Catalysis depends on charge relay system residues histidine 75, aspartate 114, and serine 192.

It belongs to the peptidase S1B family.

The protein localises to the secreted. The polypeptide is Serine protease SplD (splD) (Staphylococcus aureus (strain Mu3 / ATCC 700698)).